Reading from the N-terminus, the 1260-residue chain is UPF0507 protein LELG_01076 (1260 aa).

One can recognise a VPS9 domain in the interval 336-493 (ADYDPSATKV…LSDNDKGLNT (158 aa)).

This sequence belongs to the UPF0507 family.

The polypeptide is UPF0507 protein LELG_01076 (Lodderomyces elongisporus (strain ATCC 11503 / CBS 2605 / JCM 1781 / NBRC 1676 / NRRL YB-4239) (Yeast)).